We begin with the raw amino-acid sequence, 210 residues long: Uridine kinase (210 aa).

12 to 19 contacts ATP; it reads GGSGGGKT.

It belongs to the uridine kinase family.

The protein localises to the cytoplasm. The catalysed reaction is uridine + ATP = UMP + ADP + H(+). The enzyme catalyses cytidine + ATP = CMP + ADP + H(+). It participates in pyrimidine metabolism; CTP biosynthesis via salvage pathway; CTP from cytidine: step 1/3. The protein operates within pyrimidine metabolism; UMP biosynthesis via salvage pathway; UMP from uridine: step 1/1. The protein is Uridine kinase of Streptococcus gordonii (strain Challis / ATCC 35105 / BCRC 15272 / CH1 / DL1 / V288).